The following is a 428-amino-acid chain: Beta-1,3-galactosyl-O-glycosyl-glycoprotein beta-1,6-N-acetylglucosaminyltransferase (428 aa).

Residues 1-9 (MLRTLLRRR) are Cytoplasmic-facing. The mediates interaction with GOLPH3 and is necessary and sufficient for localization to the Golgi stretch occupies residues 5-9 (LLRRR). A helical; Signal-anchor for type II membrane protein membrane pass occupies residues 10–32 (LFSYPTKYYFMVLVLSLITFSVL). Positions 33–121 (RIHQKPEFVS…EPLSKEEAEF (89 aa)) are stem region. Over 33-428 (RIHQKPEFVS…RHKALETLKH (396 aa)) the chain is Lumenal. Residues N58 and N95 are each glycosylated (N-linked (GlcNAc...) asparagine). Intrachain disulfides connect C59-C413, C100-C172, C151-C199, and C372-C381. Residues 122-428 (PIAYSIVVHH…RHKALETLKH (307 aa)) form a catalytic region. Residues 128-130 (VVH), 155-157 (DTK), and Y187 each bind UDP-N-acetyl-alpha-D-glucosamine. Positions 243, 251, 254, 320, 341, and 358 each coordinate a glycoprotein. E320 (nucleophile) is an active-site residue. Positions 378 and 401 each coordinate UDP-N-acetyl-alpha-D-glucosamine.

The protein belongs to the glycosyltransferase 14 family. Interacts with GOLPH3; may control GCNT1 retention in the Golgi. As to expression, highly expressed in activated T-lymphocytes and myeloid cells.

The protein resides in the golgi apparatus membrane. The enzyme catalyses a 3-O-[beta-D-galactosyl-(1-&gt;3)-N-acetyl-alpha-D-galactosaminyl]-L-seryl-[protein] + UDP-N-acetyl-alpha-D-glucosamine = 3-O-{beta-D-galactosyl-(1-&gt;3)-[N-acetyl-beta-D-glucosaminyl-(1-&gt;6)]-N-acetyl-alpha-D-galactosaminyl}-L-seryl-[protein] + UDP + H(+). It carries out the reaction a 3-O-[beta-D-galactosyl-(1-&gt;3)-N-acetyl-alpha-D-galactosaminyl]-L-threonyl-[protein] + UDP-N-acetyl-alpha-D-glucosamine = a 3-O-{beta-D-galactosyl-(1-&gt;3)-[N-acetyl-beta-D-glucosaminyl-(1-&gt;6)]-N-acetyl-alpha-D-galactosaminyl}-L-threonyl-[protein] + UDP + H(+). It catalyses the reaction a globoside GalGb4Cer + UDP-N-acetyl-alpha-D-glucosamine = a globoside GlcNAc-(beta1-&gt;6)-GalGb4Cer + UDP + H(+). The catalysed reaction is a ganglioside GA1 + UDP-N-acetyl-alpha-D-glucosamine = a ganglioside beta-D-GlcNAc-(1-&gt;6)-GA1 + UDP + H(+). Its pathway is protein modification; protein glycosylation. The protein operates within glycolipid biosynthesis. Its function is as follows. Glycosyltransferase that catalyzes the transfer of an N-acetylglucosamine (GlcNAc) moiety in beta1-6 linkage from UDP-GlcNAc onto mucin-type core 1 O-glycan to form the branched mucin-type core 2 O-glycan. The catalysis is metal ion-independent and occurs with inversion of the anomeric configuration of sugar donor. Selectively involved in synthesis of mucin-type core 2 O-glycans that serve as scaffolds for the display of selectin ligand sialyl Lewis X epitope by myeloid cells, with an impact on homeostasis and recruitment to inflammatory sites. Can also act on glycolipid substrates. Transfers GlcNAc moiety to GalGb4Cer globosides in a reaction step to the synthesis of stage-specific embryonic antigen 1 (SSEA-1) determinant. Can use Galbeta1-3GalNAcalpha1- and Galbeta1-3GalNAcbeta1- oligosaccharide derivatives as acceptor substrates. The protein is Beta-1,3-galactosyl-O-glycosyl-glycoprotein beta-1,6-N-acetylglucosaminyltransferase (GCNT1) of Homo sapiens (Human).